The primary structure comprises 300 residues: Energy-coupling factor transporter ATP-binding protein EcfA2 (300 aa).

Residues 3 to 258 (IKAKNIVKIY…NKFLIENKML (256 aa)) enclose the ABC transporter domain. 40–47 (GQTGSGKT) contributes to the ATP binding site.

Belongs to the ABC transporter superfamily. Energy-coupling factor EcfA family. In terms of assembly, forms a stable energy-coupling factor (ECF) transporter complex composed of 2 membrane-embedded substrate-binding proteins (S component), 2 ATP-binding proteins (A component) and 2 transmembrane proteins (T component).

The protein localises to the cell membrane. ATP-binding (A) component of a common energy-coupling factor (ECF) ABC-transporter complex. Unlike classic ABC transporters this ECF transporter provides the energy necessary to transport a number of different substrates. The chain is Energy-coupling factor transporter ATP-binding protein EcfA2 from Mesomycoplasma hyopneumoniae (strain 7448) (Mycoplasma hyopneumoniae).